The following is a 152-amino-acid chain: MNPQRRRRLWLVLALVLAGGLATTLVAMALQRNVAYLYTPAEVLRGEAGEHARFRLGGMVEKGSFRREAGSLEAHFRVTDGDAQLPVRYDRILPDLFREGQAVVATGRMQQGVFVAEDVLAKHDETYMPKEVADKMGSAHRKHQVAPAKVTQ.

Topologically, residues 1–8 (MNPQRRRR) are cytoplasmic. Residues 9 to 29 (LWLVLALVLAGGLATTLVAMA) traverse the membrane as a helical; Signal-anchor for type II membrane protein segment. The Periplasmic segment spans residues 30 to 152 (LQRNVAYLYT…HQVAPAKVTQ (123 aa)). Positions 123 and 127 each coordinate heme.

This sequence belongs to the CcmE/CycJ family.

The protein resides in the cell inner membrane. Functionally, heme chaperone required for the biogenesis of c-type cytochromes. Transiently binds heme delivered by CcmC and transfers the heme to apo-cytochromes in a process facilitated by CcmF and CcmH. This is Cytochrome c-type biogenesis protein CcmE 2 from Xanthomonas campestris pv. campestris (strain 8004).